Reading from the N-terminus, the 733-residue chain is tRNA (guanine(27)-N(2))-dimethyltransferase (733 aa).

The span at 1–18 (MENMAEEELLPLEKEEVE) shows a compositional bias: acidic residues. The segment at 1 to 78 (MENMAEEELL…LASAPEEAKS (78 aa)) is disordered. A Phosphothreonine modification is found at Thr26. Composition is skewed to low complexity over residues 39 to 49 (PDSALDSAPTP) and 57 to 73 (PALA…ASAP). Position 66 is a phosphoserine (Ser66). The Nucleolar localization signal signature appears at 135-139 (HKLRR). The C2H2-type zinc-finger motif lies at 184–206 (YHCIICSATITRRTDMLGHVRRH). In terms of domain architecture, Trm1 methyltransferase spans 227–688 (EILKEADTDV…APLMQFKSIL (462 aa)). S-adenosyl-L-methionine contacts are provided by Arg260, Asp307, Asp357, and Ala358. The Zn(2+) site is built by Cys488, Cys491, Cys513, and Cys515. Residue Lys585 forms a Glycyl lysine isopeptide (Lys-Gly) (interchain with G-Cter in SUMO2) linkage. Residues Ser612 and Ser707 each carry the phosphoserine modification.

Belongs to the class I-like SAM-binding methyltransferase superfamily. Trm1 family. In terms of tissue distribution, widely expressed.

Its subcellular location is the nucleus. It is found in the nucleolus. The catalysed reaction is guanosine(27) in tRNA(Tyr) + 2 S-adenosyl-L-methionine = N(2)-dimethylguanosine(27) in tRNA(Tyr) + 2 S-adenosyl-L-homocysteine + 2 H(+). Specifically dimethylates a single guanine residue at position 27 of tRNA(Tyr) using S-adenosyl-L-methionine as donor of the methyl groups. Dimethylation at position 27 of tRNA(Tyr) is required for efficient translation of tyrosine codons. Also required to maintain 3-(3-amino-3-carboxypropyl)uridine (acp3U) in the D-loop of several cytoplasmic tRNAs. This Homo sapiens (Human) protein is tRNA (guanine(27)-N(2))-dimethyltransferase.